The following is a 709-amino-acid chain: Septu protein PtuA (709 aa).

In terms of biological role, component of antiviral defense system Septu type II, composed of PtuA and PtuB. Expression of Septu type II in B.subtilis (strain BEST7003) confers resistance to phages SBSphiC and SpBeta. May be an ATPase. In Bacillus mycoides (strain KBAB4) (Bacillus weihenstephanensis), this protein is Septu protein PtuA.